The primary structure comprises 162 residues: MRILKPYLRSTSIQCYLCLLLNSHFLTEAGIHVFILGCISASLPKTEANWQYVINDLKTIEHLIQSIHMDATLYTESDAHPNCKVTAMQCFLLELRVILHESKNATIYEIIENLTMLANSNLSSIENKTELGCKECEELEEKSIKEFLKSFVHIVQMFINTS.

Residues 1-29 (MRILKPYLRSTSIQCYLCLLLNSHFLTEA) form the signal peptide. A propeptide spanning residues 30-48 (GIHVFILGCISASLPKTEA) is cleaved from the precursor. 2 disulfides stabilise this stretch: cysteine 83–cysteine 133 and cysteine 90–cysteine 136. N-linked (GlcNAc...) asparagine glycans are attached at residues asparagine 104, asparagine 113, asparagine 121, and asparagine 127.

This sequence belongs to the IL-15/IL-21 family.

It is found in the secreted. Its function is as follows. Cytokine that plays a major role in the development of inflammatory and protective immune responses to microbial invaders and parasites by modulating immune cells of both the innate and adaptive immune systems. Stimulates the proliferation of natural killer cells, T-cells and B-cells and promotes the secretion of several cytokines. In monocytes, induces the production of IL8 and monocyte chemotactic protein 1/CCL2, two chemokines that attract neutrophils and monocytes respectively to sites of infection. Unlike most cytokines, which are secreted in soluble form, IL15 is expressed in association with its high affinity IL15RA on the surface of IL15-producing cells and delivers signals to target cells that express IL2RB and IL2RG receptor subunits. Binding to its receptor triggers the phosphorylation of JAK1 and JAK3 and the recruitment and subsequent phosphorylation of signal transducer and activator of transcription-3/STAT3 and STAT5. In mast cells, induces the rapid tyrosine phosphorylation of STAT6 and thereby controls mast cell survival and release of cytokines such as IL4. The polypeptide is Interleukin-15 (IL15) (Bos taurus (Bovine)).